The chain runs to 184 residues: ATP-dependent protease subunit HslV (184 aa).

Threonine 12 is an active-site residue. Na(+)-binding residues include alanine 166, cysteine 169, and threonine 172.

This sequence belongs to the peptidase T1B family. HslV subfamily. A double ring-shaped homohexamer of HslV is capped on each side by a ring-shaped HslU homohexamer. The assembly of the HslU/HslV complex is dependent on binding of ATP.

It localises to the cytoplasm. The enzyme catalyses ATP-dependent cleavage of peptide bonds with broad specificity.. Its activity is regulated as follows. Allosterically activated by HslU binding. Protease subunit of a proteasome-like degradation complex believed to be a general protein degrading machinery. The polypeptide is ATP-dependent protease subunit HslV (Brucella abortus (strain S19)).